We begin with the raw amino-acid sequence, 533 residues long: CTP synthase (533 aa).

The segment at 1–265 (MTKFIFVTGG…PAYLARRLGL (265 aa)) is amidoligase domain. Ser13 contacts CTP. Ser13 contributes to the UTP binding site. 14–19 (GLGKGI) contributes to the ATP binding site. Tyr54 lines the L-glutamine pocket. Asp71 contributes to the ATP binding site. Residues Asp71 and Glu139 each coordinate Mg(2+). Residues 146 to 148 (DIE), 186 to 191 (KTKPTQ), and Lys222 each bind CTP. UTP is bound by residues 186 to 191 (KTKPTQ) and Lys222. The 243-residue stretch at 290–532 (EIAIVGKYVK…VEAAKKKKYG (243 aa)) folds into the Glutamine amidotransferase type-1 domain. Gly351 lines the L-glutamine pocket. Cys378 acts as the Nucleophile; for glutamine hydrolysis in catalysis. Residues 379-382 (FGFQ), Glu402, and Arg459 each bind L-glutamine. Active-site residues include His505 and Glu507.

The protein belongs to the CTP synthase family. As to quaternary structure, homotetramer.

The enzyme catalyses UTP + L-glutamine + ATP + H2O = CTP + L-glutamate + ADP + phosphate + 2 H(+). The catalysed reaction is L-glutamine + H2O = L-glutamate + NH4(+). It catalyses the reaction UTP + NH4(+) + ATP = CTP + ADP + phosphate + 2 H(+). It functions in the pathway pyrimidine metabolism; CTP biosynthesis via de novo pathway; CTP from UDP: step 2/2. With respect to regulation, allosterically activated by GTP, when glutamine is the substrate; GTP has no effect on the reaction when ammonia is the substrate. The allosteric effector GTP functions by stabilizing the protein conformation that binds the tetrahedral intermediate(s) formed during glutamine hydrolysis. Inhibited by the product CTP, via allosteric rather than competitive inhibition. Catalyzes the ATP-dependent amination of UTP to CTP with either L-glutamine or ammonia as the source of nitrogen. Regulates intracellular CTP levels through interactions with the four ribonucleotide triphosphates. This is CTP synthase from Thermococcus kodakarensis (strain ATCC BAA-918 / JCM 12380 / KOD1) (Pyrococcus kodakaraensis (strain KOD1)).